The primary structure comprises 313 residues: MSEVSYDILENPEPNSHLWKQWKNLVDTEGWTSDDNSVTALTPSMPSTRSVWAVSKTAENDFVGCVIWNEYNKICFLGFFLLAPEYRGKGVGSVIWDIAMSRMPADHTLGLRGVPSMVDKYRKKATPFVGATLENYKMKVAEYHASMEKMTGDNFKLVSHLTPVEFDQLVRYDSDVNGRNRREFLELYYKLDCVLGVVLFDQHHKIIAHISAVRTSHKEDNVFKIAPLYADSPSIAMSALRVFSGVMFELHPEADVLFHLLDVGSGAFLQSFFQSLEIIPAVSGVTLFSNEWPNKGDLSKVFIAHNNSCHFDY.

Residues Tyr-6 to Gly-152 enclose the N-acetyltransferase domain.

To the C-terminal of C.elegans F21C10.9. This is an uncharacterized protein from Caenorhabditis elegans.